We begin with the raw amino-acid sequence, 81 residues long: MTDLFSSPDHTLDAQGLRCPEPVMMVRKTVRNMQTGETLLIIADDPATTRDIPGFCTFMEHELMAKETDSLPYRYLLRKKH.

Cys19 acts as the Cysteine persulfide intermediate in catalysis.

It belongs to the sulfur carrier protein TusA family. As to quaternary structure, interacts with IscS.

It is found in the cytoplasm. It participates in tRNA modification. Its function is as follows. Sulfur carrier protein involved in sulfur trafficking in the cell. Part of a sulfur-relay system required for 2-thiolation during synthesis of 2-thiouridine of the modified wobble base 5-methylaminomethyl-2-thiouridine (mnm(5)s(2)U) in tRNA. Interacts with IscS and stimulates its cysteine desulfurase activity. Accepts an activated sulfur from IscS, which is then transferred to TusD, and thus determines the direction of sulfur flow from IscS to 2-thiouridine formation. Also appears to be involved in sulfur transfer for the biosynthesis of molybdopterin. This Citrobacter koseri (strain ATCC BAA-895 / CDC 4225-83 / SGSC4696) protein is Sulfur carrier protein TusA.